The following is a 651-amino-acid chain: Transcription factor E2-alpha (651 aa).

Disordered stretches follow at residues 32–107 (ANGK…SERN), 131–208 (LSLS…KTPS), and 341–378 (DHSS…ALSP). Composition is skewed to low complexity over residues 56 to 73 (SSGS…FDPS), 131 to 148 (LSLS…KSSS), and 341 to 354 (DHSS…PSTP). A phosphoserine mark is found at serine 135 and serine 140. The residue at position 353 (threonine 353) is a Phosphothreonine. Phosphoserine is present on serine 357. Arginine 369 is subject to Omega-N-methylarginine. Serine 377 is modified (phosphoserine). The leucine-zipper stretch occupies residues 387-422 (LSKMEDRLDEAIHVLRSHAVGTASDLHGLLPGHGAL). The segment at 457–549 (HNHASLPSQP…KAEREKERRV (93 aa)) is disordered. The segment covering 461 to 479 (SLPSQPSSLPDLSQRPPDS) has biased composition (low complexity). Lysine 496 participates in a covalent cross-link: Glycyl lysine isopeptide (Lys-Gly) (interchain with G-Cter in SUMO2). A Phosphoserine modification is found at serine 526. Aspartate 528 is subject to Phosphothreonine. A Phosphoserine modification is found at aspartate 533. Basic and acidic residues predominate over residues 539–549 (QKAEREKERRV). Residues 546 to 599 (ERRVANNARERLRVRDINEAFKELGRMCQLHLSSEKPQTKLLILHQAVAVILSL) form the bHLH domain. Lysine 622 is covalently cross-linked (Glycyl lysine isopeptide (Lys-Gly) (interchain with G-Cter in SUMO2)).

As to quaternary structure, homodimer. Heterodimer; efficient DNA binding requires dimerization with another bHLH protein. Forms a heterodimer with TWIST1 and TWIST2. Forms a heterodimer with NEUROD1; the heterodimer is inhibited in presence of ID2, but not NR0B2, to E-box element. Forms a heterodimer with TCF15; the heterodimer binds E-box element. Forms a heterodimer with MYOG; heterodimerization enhances MYOG DNA-binding and transcriptional activities. Forms a heterodimer with ATOH8; repress transcription of TCF3 and TCF3-NEUROG3 dimer-induced transactivation of E box-dependent promoters. Component of a nuclear TAL-1 complex composed at least of CBFA2T3, LDB1, TAL1 and TCF3. Interacts with NEUROD2. Interacts with EP300. Interacts with PTF1A, TGFB1I1 and UBE2I. Interacts with BHLHA9. Interacts with ASB2; the interaction is mediated by SKP2 and targets TCF3 for Notch-induced proteasomal degradation. Interacts with transcription factor ASCL5/AmeloD. Forms a heterodimer with ATOH7; required for ATOH7 DNA-binding. In terms of assembly, interacts with RALGAPA1. Interacts with FIGLA. Phosphorylated following NGF stimulation. In terms of processing, undergoes Notch-induced ubiquitination and subsequent proteasomal degradation which is mediated by ASB1 or ASB2, the substrate-recognition components of probable ECS E3 ubiquitin-protein ligase complexes.

Its subcellular location is the nucleus. Functionally, transcriptional regulator involved in the initiation of neuronal differentiation and mesenchymal to epithelial transition. Heterodimers between TCF3 and tissue-specific basic helix-loop-helix (bHLH) proteins play major roles in determining tissue-specific cell fate during embryogenesis, like muscle or early B-cell differentiation. Together with TCF15, required for the mesenchymal to epithelial transition. Dimers bind DNA on E-box motifs: 5'-CANNTG-3'. Binds to the kappa-E2 site in the kappa immunoglobulin gene enhancer. Binds to IEB1 and IEB2, which are short DNA sequences in the insulin gene transcription control region. Its function is as follows. Facilitates ATOH7 binding to DNA at the consensus sequence 5'-CAGGTG-3', and positively regulates transcriptional activity. This Mus musculus (Mouse) protein is Transcription factor E2-alpha (Tcf3).